A 68-amino-acid polypeptide reads, in one-letter code: UPF0253 protein VFMJ11_0680 (68 aa).

Belongs to the UPF0253 family.

This is UPF0253 protein VFMJ11_0680 from Aliivibrio fischeri (strain MJ11) (Vibrio fischeri).